The primary structure comprises 157 residues: METLQSETKTRVLPSWLTAQVATKNVAPMKAPKRMRMAAVPVAAARLPATRTVYCMNEAEIVDVALGILIESRKQEKACEQPALAGADNPEHSPPCSVSPHTSSGSSSEEEDSGKQALAPGLSPSQRPGGSSSACSRSPEEEEEEDVLKYVREIFFS.

M1 bears the N-acetylmethionine mark. The KBM signature appears at 1 to 21 (METLQSETKTRVLPSWLTAQV). The segment at 77–147 (KACEQPALAG…SPEEEEEEDV (71 aa)) is disordered. Residues 98–107 (VSPHTSSGSS) show a composition bias toward low complexity. Polar residues predominate over residues 123–136 (SPSQRPGGSSSACS). Positions 147–157 (VLKYVREIFFS) match the XLM motif.

Interacts (via KBM motif) with XRCC5/Ku80 and XRCC6/Ku70 heterodimer. Interacts (via XLF motif) with TRIM28/KAP1, ATM, MRE11, NBN and RAD50. Interacts with splicing factor SF3B1. Interacts with ERCC6L2; this interaction is DNA independent. As to quaternary structure, does not interact with XRCC5/Ku80 and XRCC6/Ku70 heterodimer. In terms of assembly, interacts (via KBM motif) with XRCC5/Ku80 and XRCC6/Ku70 heterodimer.

It is found in the cytoplasm. It localises to the nucleus. Its subcellular location is the chromosome. Functionally, cell-cycle-specific regulator of classical non-homologous end joining (NHEJ) of DNA double-strand break (DSB) repair, which can act both as an activator or inhibitor of NHEJ, depending on the cell cycle phase. Acts as a regulator of DNA repair pathway choice by specifically inhibiting classical NHEJ during the S and G2 phases, thereby promoting error-free repair by homologous recombination during cell cycle phases when sister chromatids are present. Preferentially protects single-stranded overhangs at break sites by inhibiting classical NHEJ, thereby creating a local environment that favors homologous recombination. Acts via interaction with XRCC5/Ku80 and XRCC6/Ku70. In contrast, acts as an activator of NHEJ during G1 phase of the cell cycle: promotes classical NHEJ in G1 phase cells via multivalent interactions that increase the affinity of DNA damage response proteins for DSB-associated chromatin. Also involved in immunoglobulin V(D)J recombination. May also act as an indirect regulator of proteasome. The protein is Cell cycle regulator of non-homologous end joining of Homo sapiens (Human).